Consider the following 438-residue polypeptide: V-type ATP synthase beta chain (438 aa).

The protein belongs to the ATPase alpha/beta chains family.

Functionally, produces ATP from ADP in the presence of a proton gradient across the membrane. The V-type beta chain is a regulatory subunit. The sequence is that of V-type ATP synthase beta chain (atpB) from Chlamydia muridarum (strain MoPn / Nigg).